Consider the following 427-residue polypeptide: Probable transcription factor At5g28040 (427 aa).

The tract at residues 1–81 is disordered; that stretch reads MASDQRDTDF…APATKSSSGT (81 aa). Position 14 is a phosphoserine (serine 14). Gly residues predominate over residues 22–32; it reads GGGGGGRGGGE. Over residues 33-62 the composition is skewed to acidic residues; it reads TESDEDVVIPEPNEAEDDDHDPDPDPEYED.

The protein belongs to the GeBP family.

The chain is Probable transcription factor At5g28040 from Arabidopsis thaliana (Mouse-ear cress).